Here is a 72-residue protein sequence, read N- to C-terminus: MAKDDVIEIDGTVLEALPNANFKVELDNKHVILCHIAGKMRMHYIRIMPGDKVKVELTPYSLDKGRITFRYK.

Positions 1 to 72 (MAKDDVIEID…DKGRITFRYK (72 aa)) constitute an S1-like domain.

It belongs to the IF-1 family. Component of the 30S ribosomal translation pre-initiation complex which assembles on the 30S ribosome in the order IF-2 and IF-3, IF-1 and N-formylmethionyl-tRNA(fMet); mRNA recruitment can occur at any time during PIC assembly.

It is found in the cytoplasm. Its function is as follows. One of the essential components for the initiation of protein synthesis. Stabilizes the binding of IF-2 and IF-3 on the 30S subunit to which N-formylmethionyl-tRNA(fMet) subsequently binds. Helps modulate mRNA selection, yielding the 30S pre-initiation complex (PIC). Upon addition of the 50S ribosomal subunit IF-1, IF-2 and IF-3 are released leaving the mature 70S translation initiation complex. This Campylobacter jejuni subsp. doylei (strain ATCC BAA-1458 / RM4099 / 269.97) protein is Translation initiation factor IF-1.